We begin with the raw amino-acid sequence, 205 residues long: Enhancer of split mgamma protein (205 aa).

Residues 15-72 (YRKVMKPMLERKRRARINKCLDELKDLMVATLESEGEHVTRLEKADILELTVTHLQKM) enclose the bHLH domain. The Orange domain occupies 93-126 (FRSGYIHAVNEVSRSLSQLPGMNVSLGTQLMTHL). A WRPW motif motif is present at residues 202–205 (WRPW).

In terms of assembly, homodimer. Heterodimer with dpn. Might form higher-order oligomers. Transcription repression requires formation of a complex with a corepressor protein (Groucho). As to expression, expressed in sensory organ precursors in the wing, leg and eye imaginal disk.

It localises to the nucleus. Transcriptional repressor of genes that require a bHLH protein for their transcription. May serve as a transcriptional regulator of the Achaete-scute complex (AS-C) genes. Contributes to the neural-epidermal lineage decision during early neurogenesis. Part of the Notch signaling pathway, plays a role in neuroblasts proliferation in embryos and larvae. In the larval brain, together with other self-renewal transcriptional repressors such as klu and dpn, required for type II neuroblast self-renewal and for maintaining erm in an inactive state in intermediate neural progenitors (INP) derived from type II neuroblasts. The protein is Enhancer of split mgamma protein of Drosophila melanogaster (Fruit fly).